The sequence spans 156 residues: MKFNDVYNKHHKIIHHLLKKYNISYNYDEYYQLLLIKMWQLSQIYKPSSKQSLSSFLFTRLNFYLIDLFRQQNQLKDVILCENNSPTLTEQPTYFNEHDLRLQDIFKLLNQRERLWLKLYLEGYKQFEIAEIMSLSLSTIKLIKMSVKRKCQHNFN.

The short motif at 29-44 is the Polymerase core binding element; that stretch reads EYYQLLLIKMWQLSQI. A DNA-binding region (H-T-H motif) is located at residues 126–145; the sequence is QFEIAEIMSLSLSTIKLIKM.

It belongs to the sigma-70 factor family.

Functionally, sigma factors are initiation factors that promote the attachment of RNA polymerase to specific initiation sites and are then released. Sigma-S contributes to the protection against external stress, thus playing a role in cellular fitness and survival. This is RNA polymerase sigma factor SigS (sigS) from Staphylococcus aureus (strain COL).